A 36-amino-acid chain; its full sequence is Photosystem II reaction center protein M (36 aa).

The helical transmembrane segment at 5-25 threads the bilayer; the sequence is ILGLIATALFIIIPTSFLLIL.

Belongs to the PsbM family. PSII is composed of 1 copy each of membrane proteins PsbA, PsbB, PsbC, PsbD, PsbE, PsbF, PsbH, PsbI, PsbJ, PsbK, PsbL, PsbM, PsbT, PsbX, PsbY, PsbZ, Psb30/Ycf12, at least 3 peripheral proteins of the oxygen-evolving complex and a large number of cofactors. It forms dimeric complexes.

It is found in the plastid. Its subcellular location is the chloroplast thylakoid membrane. One of the components of the core complex of photosystem II (PSII). PSII is a light-driven water:plastoquinone oxidoreductase that uses light energy to abstract electrons from H(2)O, generating O(2) and a proton gradient subsequently used for ATP formation. It consists of a core antenna complex that captures photons, and an electron transfer chain that converts photonic excitation into a charge separation. This subunit is found at the monomer-monomer interface. The sequence is that of Photosystem II reaction center protein M from Chlorokybus atmophyticus (Soil alga).